The chain runs to 52 residues: Conotoxin Cal9.2b (52 aa).

Positions 1–6 are excised as a propeptide; it reads KKGVTL. 3 disulfides stabilise this stretch: C14/C31, C19/C41, and C21/C46.

Expressed by the venom duct.

The protein resides in the secreted. Probable neurotoxin with unknown target. Possibly targets ion channels. This chain is Conotoxin Cal9.2b, found in Californiconus californicus (California cone).